The chain runs to 734 residues: Translation initiation factor IF-2 (734 aa).

Residues 39–110 (SKFAPRSSFT…TGKPETKKRE (72 aa)) form a disordered region. A compositionally biased stretch (basic and acidic residues) spans 82–110 (DYEKRKLAEQRATRRLKGDTGKPETKKRE). Positions 238-405 (NRPPIVTVMG…SIVLQAEILD (168 aa)) constitute a tr-type G domain. Residues 247 to 254 (GHVDHGKT) form a G1 region. 247–254 (GHVDHGKT) contacts GTP. The tract at residues 272 to 276 (GITQH) is G2. The G3 stretch occupies residues 293 to 296 (DTPG). GTP-binding positions include 293 to 297 (DTPGH) and 347 to 350 (NKCD). Residues 347–350 (NKCD) are G4. The tract at residues 383–385 (SAK) is G5.

This sequence belongs to the TRAFAC class translation factor GTPase superfamily. Classic translation factor GTPase family. IF-2 subfamily.

The protein resides in the cytoplasm. In terms of biological role, one of the essential components for the initiation of protein synthesis. Protects formylmethionyl-tRNA from spontaneous hydrolysis and promotes its binding to the 30S ribosomal subunits. Also involved in the hydrolysis of GTP during the formation of the 70S ribosomal complex. The sequence is that of Translation initiation factor IF-2 from Pelagibacter ubique (strain HTCC1062).